Here is a 493-residue protein sequence, read N- to C-terminus: Cytochrome c-552 (493 aa).

Positions 1–25 (MEKKLKSWQGWLLSGGSMVVVFVLG) are cleaved as a signal peptide. His-116 contributes to the heme c binding site. The heme site is built by Cys-144, Cys-147, and Lys-148. Heme c-binding residues include Cys-182, Cys-185, His-186, Cys-224, Cys-227, and His-228. Glu-230, Tyr-231, Lys-276, and Gln-278 together coordinate Ca(2+). Tyr-231 contributes to the substrate binding site. Position 279 (His-279) interacts with substrate. His-290, Cys-297, Cys-300, His-301, His-315, Cys-328, Cys-331, His-332, and His-407 together coordinate heme c.

This sequence belongs to the cytochrome c-552 family. Ca(2+) is required as a cofactor. The cofactor is heme c.

It localises to the periplasm. It catalyses the reaction 6 Fe(III)-[cytochrome c] + NH4(+) + 2 H2O = 6 Fe(II)-[cytochrome c] + nitrite + 8 H(+). Its pathway is nitrogen metabolism; nitrate reduction (assimilation). Its function is as follows. Catalyzes the reduction of nitrite to ammonia, consuming six electrons in the process. This chain is Cytochrome c-552, found in Bacteroides thetaiotaomicron (strain ATCC 29148 / DSM 2079 / JCM 5827 / CCUG 10774 / NCTC 10582 / VPI-5482 / E50).